We begin with the raw amino-acid sequence, 299 residues long: Inactive recombination-promoting nuclease-like protein RpnE (299 aa).

It belongs to the Rpn/YhgA-like nuclease family.

In terms of biological role, upon expression has no effect on RecA-independent DNA recombination, cell viability or DNA damage. This chain is Inactive recombination-promoting nuclease-like protein RpnE (yfaD), found in Escherichia coli (strain K12).